Reading from the N-terminus, the 2291-residue chain is Protein Ycf2 (2291 aa).

Residue 1645-1652 participates in ATP binding; sequence GSIGTGRS.

It belongs to the Ycf2 family.

The protein resides in the plastid. Its subcellular location is the chloroplast stroma. In terms of biological role, probable ATPase of unknown function. Its presence in a non-photosynthetic plant (Epifagus virginiana) and experiments in tobacco indicate that it has an essential function which is probably not related to photosynthesis. The protein is Protein Ycf2 of Olimarabidopsis pumila (Dwarf rocket).